A 421-amino-acid chain; its full sequence is Adenylosuccinate synthetase (421 aa).

GTP-binding positions include 11-17 (GDEGKGK) and 39-41 (GHT). The Proton acceptor role is filled by Asp-12. Mg(2+) is bound by residues Asp-12 and Gly-39. IMP-binding positions include 12 to 15 (DEGK), 37 to 40 (NAGH), Thr-129, Arg-143, Asn-219, Thr-234, and Arg-298. The Proton donor role is filled by His-40. Residue 294–300 (VTTGRRR) participates in substrate binding. Residues Arg-300, 326-328 (KLD), and 409-411 (GTG) each bind GTP.

It belongs to the adenylosuccinate synthetase family. Homodimer. Mg(2+) serves as cofactor.

Its subcellular location is the cytoplasm. The catalysed reaction is IMP + L-aspartate + GTP = N(6)-(1,2-dicarboxyethyl)-AMP + GDP + phosphate + 2 H(+). The protein operates within purine metabolism; AMP biosynthesis via de novo pathway; AMP from IMP: step 1/2. In terms of biological role, plays an important role in the de novo pathway and in the salvage pathway of purine nucleotide biosynthesis. Catalyzes the first committed step in the biosynthesis of AMP from IMP. This chain is Adenylosuccinate synthetase, found in Paracoccidioides lutzii (strain ATCC MYA-826 / Pb01) (Paracoccidioides brasiliensis).